Here is a 448-residue protein sequence, read N- to C-terminus: Gamete and mating-type specific protein A (448 aa).

A signal peptide spans 1–19; it reads MKLILVLLCLISTLFVVKG. The SCP domain maps to 30–157; the sequence is VSYHNKWRSS…PDKSEVSCSY (128 aa). 3 N-linked (GlcNAc...) asparagine glycosylation sites follow: Asn55, Asn98, and Asn119. The interval 171-242 is disordered; sequence PKTTTPAPTT…PTTPAPTSTL (72 aa). The segment covering 178 to 236 has biased composition (pro residues); the sequence is PTTPAPTTPKPTTPAPTTPKPTTPAPTTPKPTTPAPTTPKPTTPAPTTPKPTTPAPTTP. Residues Cys262, His397, and Asn415 contribute to the active site.

It belongs to the peptidase C1 family.

It is found in the secreted. Thiol protease that seems to be involved in the sexual development. The sequence is that of Gamete and mating-type specific protein A (gmsA) from Dictyostelium discoideum (Social amoeba).